Reading from the N-terminus, the 150-residue chain is 6,7-dimethyl-8-ribityllumazine synthase (150 aa).

5-amino-6-(D-ribitylamino)uracil-binding positions include phenylalanine 11, 43-45, and 67-69; these read VFD and AVI. (2S)-2-hydroxy-3-oxobutyl phosphate is bound at residue 72–73; the sequence is AT. The active-site Proton donor is the histidine 75. Leucine 100 is a 5-amino-6-(D-ribitylamino)uracil binding site. Arginine 115 provides a ligand contact to (2S)-2-hydroxy-3-oxobutyl phosphate.

This sequence belongs to the DMRL synthase family.

It catalyses the reaction (2S)-2-hydroxy-3-oxobutyl phosphate + 5-amino-6-(D-ribitylamino)uracil = 6,7-dimethyl-8-(1-D-ribityl)lumazine + phosphate + 2 H2O + H(+). Its pathway is cofactor biosynthesis; riboflavin biosynthesis; riboflavin from 2-hydroxy-3-oxobutyl phosphate and 5-amino-6-(D-ribitylamino)uracil: step 1/2. Its function is as follows. Catalyzes the formation of 6,7-dimethyl-8-ribityllumazine by condensation of 5-amino-6-(D-ribitylamino)uracil with 3,4-dihydroxy-2-butanone 4-phosphate. This is the penultimate step in the biosynthesis of riboflavin. This is 6,7-dimethyl-8-ribityllumazine synthase from Pyrobaculum calidifontis (strain DSM 21063 / JCM 11548 / VA1).